We begin with the raw amino-acid sequence, 296 residues long: GTPase Era (296 aa).

The Era-type G domain maps to 3 to 170; the sequence is KSGFVTIVGR…KELMFKYIPE (168 aa). Residues 11–18 are G1; the sequence is GRPNVGKS. 11–18 provides a ligand contact to GTP; the sequence is GRPNVGKS. A G2 region spans residues 37–41; it reads QTTRN. The tract at residues 58–61 is G3; sequence DTPG. Residues 58–62 and 120–123 contribute to the GTP site; these read DTPGI and NKID. The segment at 120 to 123 is G4; that stretch reads NKID. The G5 stretch occupies residues 149-151; that stretch reads ISA. Residues 201–278 enclose the KH type-2 domain; that stretch reads LSEEVPHGIA…YIRLWVKVKE (78 aa).

This sequence belongs to the TRAFAC class TrmE-Era-EngA-EngB-Septin-like GTPase superfamily. Era GTPase family. As to quaternary structure, monomer.

The protein resides in the cytoplasm. It localises to the cell membrane. In terms of biological role, an essential GTPase that binds both GDP and GTP, with rapid nucleotide exchange. Plays a role in 16S rRNA processing and 30S ribosomal subunit biogenesis and possibly also in cell cycle regulation and energy metabolism. The sequence is that of GTPase Era from Clostridium botulinum (strain Langeland / NCTC 10281 / Type F).